A 623-amino-acid polypeptide reads, in one-letter code: MLNRKWSFVFLTFLLVISVNANDDVFEDEDEASESGVEKDEFVPSNFVAPKLADTSKPNFFDYFPVGSKIGQTWIKSLAKKDDVDSEIAKYNGEWSIGAPTKVSIEGDYGLIVKTKARHHAIAAKLETPFVFGSNKFIAQYDVKFEEGQECGGGYLKLLSEGAEKDLASFQDKTPYTIMFGPDKCGASGQVHLIFRYKNPVNGTVSEYHAKQPASIGTAYWDDHNTHLFTLVVKPTGEYSVSVDGKSLYYGNMLSDISPSLTPPKEIFDETDLKPEDWDEREQIEDETASKPDDWDENEPQNVVDESATKPYDWNEEENELIPDPEAQKPQDWDEDMDGSWEAPLIDNPACKGLSGCGTWKPPTIKNPKYRGKWVRPKIANPAYKGKWSPRLIDNPNYFEPKPFDGLAPISAVGIELWTMSENILFDNILITSSEQDASEIAKQTFYIKQQEEYRLAAATGSSNGIFQQIVDATNEKPWLWAVYILCILLPLIAIGVFCFGKGSKPAPNFAKKSDTYSPDDDRVPNLVDDQEEEIIAEDEEDNQPGPSGTQNQPPIDEDEQDEVEQQPSSSKTASSESSSAAEEEDNDHVVHENEPVQPTEEVAKKSPRVTGGAKRRTARRGD.

A signal peptide spans 1–21; that stretch reads MLNRKWSFVFLTFLLVISVNA. Ca(2+) is bound at residue aspartate 108. Cysteines 151 and 185 form a disulfide. Residues tyrosine 155, lysine 157, tyrosine 176, and aspartate 183 each contribute to the an alpha-D-glucoside site. Asparagine 202 carries N-linked (GlcNAc...) asparagine glycosylation. A disordered region spans residues 260–337; sequence SLTPPKEIFD…QKPQDWDEDM (78 aa). Over residues 266–276 the composition is skewed to basic and acidic residues; the sequence is EIFDETDLKPE. The p domain (Extended arm) stretch occupies residues 267–400; sequence IFDETDLKPE…RLIDNPNYFE (134 aa). 5 tandem repeats follow at residues 269-281, 286-298, 305-317, 324-336, and 339-349. 2 4 X approximate repeats regions span residues 269 to 336 and 339 to 396; these read DETD…WDED and GSWE…IDNP. Acidic residues-rich tracts occupy residues 277–287 and 314–323; these read DWDEREQIEDE and WNEEENELIP. Cysteine 351 and cysteine 357 are joined by a disulfide. 3 repeat units span residues 358-368, 372-382, and 386-396. Glutamate 416 provides a ligand contact to an alpha-D-glucoside. Residue aspartate 427 coordinates Ca(2+). Residues 480–500 traverse the membrane as a helical segment; that stretch reads LWAVYILCILLPLIAIGVFCF. The disordered stretch occupies residues 536–623; it reads IAEDEEDNQP…AKRRTARRGD (88 aa). The span at 556–565 shows a compositional bias: acidic residues; that stretch reads IDEDEQDEVE. The segment covering 566–581 has biased composition (low complexity); sequence QQPSSSKTASSESSSA. The span at 614–623 shows a compositional bias: basic residues; that stretch reads AKRRTARRGD.

This sequence belongs to the calreticulin family. Glycosylation is important for its biological activity.

It localises to the endoplasmic reticulum membrane. Its subcellular location is the cytoplasm. The protein localises to the perinuclear region. It is found in the cytoplasmic vesicle. Functionally, calcium-binding protein that interacts with newly synthesized monoglucosylated glycoproteins in the endoplasmic reticulum. It may act in assisting protein assembly and/or in the retention within the ER of unassembled protein subunits. It seems to play a major role in the quality control apparatus of the ER by the retention of incorrectly folded proteins. Required for embryogenesis and larval development under heat and ER stress conditions. May be important for germ cell development. Involved in neuronal necrotic cell death. The polypeptide is Calnexin (Caenorhabditis briggsae).